Consider the following 197-residue polypeptide: Mediator of RNA polymerase II transcription subunit 10 (197 aa).

The disordered stretch occupies residues 1-39 (MSSTAGTRRPRQITPTSPSPSPEPQPGATNGSSSTINVA). Over residues 27-37 (GATNGSSSTIN) the composition is skewed to polar residues.

It belongs to the Mediator complex subunit 10 family. Component of the Mediator complex.

Its subcellular location is the nucleus. Its function is as follows. Component of the Mediator complex, a coactivator involved in the regulated transcription of nearly all RNA polymerase II-dependent genes. Mediator functions as a bridge to convey information from gene-specific regulatory proteins to the basal RNA polymerase II transcription machinery. Mediator is recruited to promoters by direct interactions with regulatory proteins and serves as a scaffold for the assembly of a functional preinitiation complex with RNA polymerase II and the general transcription factors. The sequence is that of Mediator of RNA polymerase II transcription subunit 10 (NUT2) from Mycosarcoma maydis (Corn smut fungus).